Consider the following 330-residue polypeptide: Ribosomal RNA small subunit methyltransferase C (330 aa).

This sequence belongs to the methyltransferase superfamily. RsmC family. As to quaternary structure, monomer.

The protein localises to the cytoplasm. It carries out the reaction guanosine(1207) in 16S rRNA + S-adenosyl-L-methionine = N(2)-methylguanosine(1207) in 16S rRNA + S-adenosyl-L-homocysteine + H(+). Functionally, specifically methylates the guanine in position 1207 of 16S rRNA in the 30S particle. The chain is Ribosomal RNA small subunit methyltransferase C from Haemophilus influenzae (strain 86-028NP).